Here is an 88-residue protein sequence, read N- to C-terminus: Apolipoprotein C-I (88 aa).

Residues 1–26 (MRLFIALPVLIVVVAMTLEGPAPAQA) form the signal peptide.

This sequence belongs to the apolipoprotein C1 family. In terms of tissue distribution, adult and fetal liver.

The protein localises to the secreted. In terms of biological role, inhibitor of lipoprotein binding to the low density lipoprotein (LDL) receptor, LDL receptor-related protein, and very low density lipoprotein (VLDL) receptor. Associates with high density lipoproteins (HDL) and the triacylglycerol-rich lipoproteins in the plasma and makes up about 10% of the protein of the VLDL and 2% of that of HDL. Appears to interfere directly with fatty acid uptake and is also the major plasma inhibitor of cholesteryl ester transfer protein (CETP). Modulates the interaction of APOE with beta-migrating VLDL and inhibits binding of beta-VLDL to the LDL receptor-related protein. Binds free fatty acids and reduces their intracellular esterification. The chain is Apolipoprotein C-I (Apoc1) from Mus musculus (Mouse).